Here is a 618-residue protein sequence, read N- to C-terminus: 1-deoxy-D-xylulose-5-phosphate synthase (618 aa).

Thiamine diphosphate-binding positions include H70 and 111 to 113 (GHS). D142 provides a ligand contact to Mg(2+). Residues 143–144 (GS), N171, Y278, and E360 contribute to the thiamine diphosphate site. Residue N171 coordinates Mg(2+).

It belongs to the transketolase family. DXPS subfamily. As to quaternary structure, homodimer. Requires Mg(2+) as cofactor. It depends on thiamine diphosphate as a cofactor.

The catalysed reaction is D-glyceraldehyde 3-phosphate + pyruvate + H(+) = 1-deoxy-D-xylulose 5-phosphate + CO2. Its pathway is metabolic intermediate biosynthesis; 1-deoxy-D-xylulose 5-phosphate biosynthesis; 1-deoxy-D-xylulose 5-phosphate from D-glyceraldehyde 3-phosphate and pyruvate: step 1/1. Functionally, catalyzes the acyloin condensation reaction between C atoms 2 and 3 of pyruvate and glyceraldehyde 3-phosphate to yield 1-deoxy-D-xylulose-5-phosphate (DXP). The polypeptide is 1-deoxy-D-xylulose-5-phosphate synthase (Helicobacter pylori (strain HPAG1)).